Here is a 433-residue protein sequence, read N- to C-terminus: Oxaloacetate decarboxylase beta chain 2 (433 aa).

Transmembrane regions (helical) follow at residues 13 to 35, 42 to 64, 125 to 147, 160 to 182, 214 to 236, 266 to 288, 308 to 327, 339 to 361, and 413 to 432; these read LMHL…WLAI, LLLL…LALT, LFYK…VGAM, LLLG…TLNY, LAPE…VPLI, ILFP…PLLG, TVQN…SVGA, TLGI…VLMA, and VAGV…YVLA.

It belongs to the GcdB/MmdB/OadB family. Heterotrimer of an alpha, a beta and a gamma subunit. The cofactor is Na(+).

Its subcellular location is the cell membrane. The enzyme catalyses oxaloacetate + 2 Na(+)(in) + H(+) = pyruvate + 2 Na(+)(out) + CO2. Catalyzes the decarboxylation of oxaloacetate coupled to Na(+) translocation. The sequence is that of Oxaloacetate decarboxylase beta chain 2 (oadB2) from Salmonella typhimurium (strain LT2 / SGSC1412 / ATCC 700720).